A 75-amino-acid polypeptide reads, in one-letter code: Cytochrome c oxidase assembly factor 5 (75 aa).

In terms of domain architecture, CHCH spans 28 to 66; sequence QTDCVLQEGKSPKECLKEGYCKALQVTFFECKRSILDTR. Positions 31–42 match the Cx10C motif motif; it reads CVLQEGKSPKEC. Disulfide bonds link cysteine 31-cysteine 58 and cysteine 42-cysteine 48. The Cx9C motif motif lies at 48-58; sequence CKALQVTFFEC.

The protein belongs to the PET191 family.

Functionally, involved in an early step of the mitochondrial complex IV assembly process. The protein is Cytochrome c oxidase assembly factor 5 (coa5) of Xenopus tropicalis (Western clawed frog).